The chain runs to 99 residues: Cell division protein FtsB (99 aa).

The Cytoplasmic portion of the chain corresponds to 1–3 (MKF). The chain crosses the membrane as a helical span at residues 4–21 (FVIALIVLLGLLQYRLWS). At 22–99 (GDNSLPEYFV…GDRSVSSPSQ (78 aa)) the chain is on the periplasmic side. Positions 31-73 (VLQKQIAAQQEGNAKLNERNQVLKEEIIDLKSGTEAIEERARN) form a coiled coil.

It belongs to the FtsB family. In terms of assembly, part of a complex composed of FtsB, FtsL and FtsQ.

The protein resides in the cell inner membrane. In terms of biological role, essential cell division protein. May link together the upstream cell division proteins, which are predominantly cytoplasmic, with the downstream cell division proteins, which are predominantly periplasmic. In Shewanella sp. (strain ANA-3), this protein is Cell division protein FtsB.